Here is a 1054-residue protein sequence, read N- to C-terminus: DIS3-like exonuclease 1 (1054 aa).

The CSD1 domain occupies 236-313 (AGIKSGRYIQ…WKGRTAALCE (78 aa)). The disordered stretch occupies residues 313–332 (ENDSEDKASGESPSEPMPTG). The CSD2 domain occupies 365–431 (ILVTPWDYRI…GEIATILVEN (67 aa)). Residues 465 to 816 (RRDLRSTHLV…VHRLLMAAIS (352 aa)) form the RNB domain. Ser-989 is subject to Phosphoserine.

Belongs to the RNR ribonuclease family. Component of the RNA exosome complex. The catalytically inactive RNA exosome core (Exo-9) complex is believed to associate with catalytic subunits EXOSC10, and DIS3 or DIS3L in cytoplasmic- and nuclear-specific RNA exosome complex forms. It depends on Mg(2+) as a cofactor.

It is found in the cytoplasm. The enzyme catalyses Exonucleolytic cleavage in the 3'- to 5'-direction to yield nucleoside 5'-phosphates.. Catalytic component of the RNA exosome complex which has 3'-&gt;5' exoribonuclease activity and participates in a multitude of cellular RNA processing and degradation events. In the cytoplasm, the RNA exosome complex is involved in general mRNA turnover and specifically degrades inherently unstable mRNAs containing AU-rich elements (AREs) within their 3' untranslated regions, and in RNA surveillance pathways, preventing translation of aberrant mRNAs. It seems to be involved in degradation of histone mRNA. The protein is DIS3-like exonuclease 1 (Dis3l) of Rattus norvegicus (Rat).